Reading from the N-terminus, the 555-residue chain is Dihydroxy-acid dehydratase (555 aa).

Cys-46 serves as a coordination point for [2Fe-2S] cluster. Mg(2+) is bound at residue Asp-78. Cys-119 provides a ligand contact to [2Fe-2S] cluster. Asp-120 and Lys-121 together coordinate Mg(2+). Lys-121 is subject to N6-carboxylysine. Cys-191 contacts [2Fe-2S] cluster. Residue Glu-442 coordinates Mg(2+). Catalysis depends on Ser-468, which acts as the Proton acceptor.

This sequence belongs to the IlvD/Edd family. Homodimer. [2Fe-2S] cluster is required as a cofactor. Requires Mg(2+) as cofactor.

The catalysed reaction is (2R)-2,3-dihydroxy-3-methylbutanoate = 3-methyl-2-oxobutanoate + H2O. It carries out the reaction (2R,3R)-2,3-dihydroxy-3-methylpentanoate = (S)-3-methyl-2-oxopentanoate + H2O. It participates in amino-acid biosynthesis; L-isoleucine biosynthesis; L-isoleucine from 2-oxobutanoate: step 3/4. It functions in the pathway amino-acid biosynthesis; L-valine biosynthesis; L-valine from pyruvate: step 3/4. In terms of biological role, functions in the biosynthesis of branched-chain amino acids. Catalyzes the dehydration of (2R,3R)-2,3-dihydroxy-3-methylpentanoate (2,3-dihydroxy-3-methylvalerate) into 2-oxo-3-methylpentanoate (2-oxo-3-methylvalerate) and of (2R)-2,3-dihydroxy-3-methylbutanoate (2,3-dihydroxyisovalerate) into 2-oxo-3-methylbutanoate (2-oxoisovalerate), the penultimate precursor to L-isoleucine and L-valine, respectively. This is Dihydroxy-acid dehydratase from Thermus thermophilus (strain ATCC BAA-163 / DSM 7039 / HB27).